We begin with the raw amino-acid sequence, 215 residues long: WAT1-related protein At3g28060 (215 aa).

5 helical membrane passes run I48–Y68, F82–F102, I117–S137, V146–F166, and V176–A196. The 122-residue stretch at A65–F186 folds into the EamA domain.

This sequence belongs to the drug/metabolite transporter (DMT) superfamily. Plant drug/metabolite exporter (P-DME) (TC 2.A.7.4) family.

It localises to the membrane. This is WAT1-related protein At3g28060 from Arabidopsis thaliana (Mouse-ear cress).